The following is a 649-amino-acid chain: Cysteine-rich receptor-like protein kinase 2 (649 aa).

An N-terminal signal peptide occupies residues 1–29; it reads MKKEPVHILPLYLPCLLMFLLSSLRQITG. Topologically, residues 30–258 are extracellular; it reads DARARAVKVT…IPRNGRSRGS (229 aa). 2 Gnk2-homologous domains span residues 33–134 and 139–245; these read ARAV…NYSF and KGPE…DQDF. N-linked (GlcNAc...) asparagine glycosylation is found at Asn-47, Asn-131, Asn-149, Asn-154, and Asn-214. Residues 259 to 279 traverse the membrane as a helical segment; it reads VVVIVVSVLSSVVVFMIGVAV. At 280 to 649 the chain is on the cytoplasmic side; it reads SVYICKRRTI…TVSQSSFYGR (370 aa). Residues 325-608 enclose the Protein kinase domain; it reads FDNANKLGQG…HMLKNKEEVL (284 aa). ATP contacts are provided by residues 331-339 and Lys-353; that span reads LGQGGFGTV. Tyr-398 carries the phosphotyrosine modification. The active-site Proton acceptor is the Asp-450. Ser-454 and Ser-483 each carry phosphoserine. Phosphothreonine is present on residues Thr-484 and Thr-489. Residue Tyr-497 is modified to Phosphotyrosine.

This sequence belongs to the protein kinase superfamily. Ser/Thr protein kinase family. CRK subfamily.

It is found in the membrane. It catalyses the reaction L-seryl-[protein] + ATP = O-phospho-L-seryl-[protein] + ADP + H(+). The catalysed reaction is L-threonyl-[protein] + ATP = O-phospho-L-threonyl-[protein] + ADP + H(+). This is Cysteine-rich receptor-like protein kinase 2 (CRK2) from Arabidopsis thaliana (Mouse-ear cress).